We begin with the raw amino-acid sequence, 200 residues long: Protein GrpE (200 aa).

The span at 1–10 shows a compositional bias: basic and acidic residues; it reads MQEKDSKDVT. A disordered region spans residues 1–57; sequence MQEKDSKDVTMEDEETIASQEEIEVEGNSEESSKEEESNNSEISDENLSEENLKLKD. The span at 11 to 29 shows a compositional bias: acidic residues; it reads MEDEETIASQEEIEVEGNS.

This sequence belongs to the GrpE family. As to quaternary structure, homodimer.

It localises to the cytoplasm. Participates actively in the response to hyperosmotic and heat shock by preventing the aggregation of stress-denatured proteins, in association with DnaK and GrpE. It is the nucleotide exchange factor for DnaK and may function as a thermosensor. Unfolded proteins bind initially to DnaJ; upon interaction with the DnaJ-bound protein, DnaK hydrolyzes its bound ATP, resulting in the formation of a stable complex. GrpE releases ADP from DnaK; ATP binding to DnaK triggers the release of the substrate protein, thus completing the reaction cycle. Several rounds of ATP-dependent interactions between DnaJ, DnaK and GrpE are required for fully efficient folding. This Clostridium acetobutylicum (strain ATCC 824 / DSM 792 / JCM 1419 / IAM 19013 / LMG 5710 / NBRC 13948 / NRRL B-527 / VKM B-1787 / 2291 / W) protein is Protein GrpE.